The following is a 113-amino-acid chain: Large ribosomal subunit protein bL19 (113 aa).

It belongs to the bacterial ribosomal protein bL19 family.

Functionally, this protein is located at the 30S-50S ribosomal subunit interface and may play a role in the structure and function of the aminoacyl-tRNA binding site. This chain is Large ribosomal subunit protein bL19, found in Rhodococcus erythropolis (strain PR4 / NBRC 100887).